Reading from the N-terminus, the 209-residue chain is Scoloptoxin SSD346 (209 aa).

The first 22 residues, 1–22 (NILLSSTLFVLLMFQIIGSGLG), serve as a signal peptide directing secretion.

Post-translationally, contains 2 disulfide bonds. As to expression, expressed by the venom gland.

It localises to the secreted. Functionally, may act as a voltage-gated calcium channel inhibitor. The chain is Scoloptoxin SSD346 from Scolopendra dehaani (Thai centipede).